Reading from the N-terminus, the 688-residue chain is Polyribonucleotide nucleotidyltransferase (688 aa).

Positions 484 and 490 each coordinate Mg(2+). A KH domain is found at 550–609; it reads PTTEIFNVAPDKIVEIIGQGGRVIKEIVEKFEVKIDLNKPSGEVKIMGNKERVLKTKEFI. Residues 626–688 form the S1 motif domain; sequence DEVLEAQVKR…NKGKIALDLA (63 aa).

The protein belongs to the polyribonucleotide nucleotidyltransferase family. It depends on Mg(2+) as a cofactor.

The protein localises to the cytoplasm. It carries out the reaction RNA(n+1) + phosphate = RNA(n) + a ribonucleoside 5'-diphosphate. In terms of biological role, involved in mRNA degradation. Catalyzes the phosphorolysis of single-stranded polyribonucleotides processively in the 3'- to 5'-direction. In Helicobacter pylori (strain ATCC 700392 / 26695) (Campylobacter pylori), this protein is Polyribonucleotide nucleotidyltransferase.